Reading from the N-terminus, the 95-residue chain is Aspartyl/glutamyl-tRNA(Asn/Gln) amidotransferase subunit C (95 aa).

This sequence belongs to the GatC family. In terms of assembly, heterotrimer of A, B and C subunits.

The enzyme catalyses L-glutamyl-tRNA(Gln) + L-glutamine + ATP + H2O = L-glutaminyl-tRNA(Gln) + L-glutamate + ADP + phosphate + H(+). It catalyses the reaction L-aspartyl-tRNA(Asn) + L-glutamine + ATP + H2O = L-asparaginyl-tRNA(Asn) + L-glutamate + ADP + phosphate + 2 H(+). Its function is as follows. Allows the formation of correctly charged Asn-tRNA(Asn) or Gln-tRNA(Gln) through the transamidation of misacylated Asp-tRNA(Asn) or Glu-tRNA(Gln) in organisms which lack either or both of asparaginyl-tRNA or glutaminyl-tRNA synthetases. The reaction takes place in the presence of glutamine and ATP through an activated phospho-Asp-tRNA(Asn) or phospho-Glu-tRNA(Gln). The sequence is that of Aspartyl/glutamyl-tRNA(Asn/Gln) amidotransferase subunit C from Clostridium botulinum (strain Loch Maree / Type A3).